The chain runs to 312 residues: Probable deoxyhypusine synthase (312 aa).

The active-site Nucleophile is the lysine 285.

Belongs to the deoxyhypusine synthase family. Requires NAD(+) as cofactor.

The enzyme catalyses [eIF5A protein]-L-lysine + spermidine = [eIF5A protein]-deoxyhypusine + propane-1,3-diamine. It functions in the pathway protein modification; eIF5A hypusination. In terms of biological role, catalyzes the NAD-dependent oxidative cleavage of spermidine and the subsequent transfer of the butylamine moiety of spermidine to the epsilon-amino group of a specific lysine residue of the eIF-5A precursor protein to form the intermediate deoxyhypusine residue. This is Probable deoxyhypusine synthase from Saccharolobus islandicus (strain M.16.4 / Kamchatka #3) (Sulfolobus islandicus).